Here is a 318-residue protein sequence, read N- to C-terminus: Deoxyhypusine hydroxylase (318 aa).

Fe cation contacts are provided by H65, E66, H98, and E99. HEAT-like PBS-type repeat units follow at residues 96 to 122 (VRHE…YYKE), 194 to 220 (YRYR…GFKD), 225 to 251 (FRHE…VLEN), and 258 to 284 (VRHE…FSKD). Fe cation contacts are provided by H227, E228, H260, and E261.

The protein belongs to the deoxyhypusine hydroxylase family. The cofactor is Fe(2+).

The protein resides in the cytoplasm. It localises to the nucleus. The catalysed reaction is [eIF5A protein]-deoxyhypusine + AH2 + O2 = [eIF5A protein]-hypusine + A + H2O. It functions in the pathway protein modification; eIF5A hypusination. Its function is as follows. Catalyzes the hydroxylation of the N(6)-(4-aminobutyl)-L-lysine intermediate to form hypusine, an essential post-translational modification only found in mature eIF-5A factor. In Schizosaccharomyces pombe (strain 972 / ATCC 24843) (Fission yeast), this protein is Deoxyhypusine hydroxylase (lia1).